The chain runs to 289 residues: MKFAKGHGTQNDFVLLPDLNAQYSLTARAVAALCDRRRGLGADGLLRVTTAGAALAAGVFDRLPEGVAEDDWFMDYRNADGSIAEMCGNGVRVFAHYLHAGGLEHRSEFVVGSLAGPRPVVLHEADDTTADVTVEMGKAVRCGTGTATVGGRRFSGLAVDVGNPHLACVDEELTDAGLASLDVASPVAFDSTQFPHGVNVEILTAPRDGAVAMRVHERGVGETRSCGTGTVAAAVAALDHQGARTGTLRVRIPGGEVCVTVTETDSYLRGPSVLLAHGELAEQWWAAQH.

Asn-11 and Asn-78 together coordinate substrate. Cys-87 functions as the Proton donor in the catalytic mechanism. Substrate-binding positions include 88-89, Asn-163, Asn-199, and 217-218; these read GN and ER. The Proton acceptor role is filled by Cys-226. 227-228 contributes to the substrate binding site; it reads GT.

Belongs to the diaminopimelate epimerase family. In terms of assembly, homodimer.

The protein resides in the cytoplasm. It catalyses the reaction (2S,6S)-2,6-diaminopimelate = meso-2,6-diaminopimelate. It participates in amino-acid biosynthesis; L-lysine biosynthesis via DAP pathway; DL-2,6-diaminopimelate from LL-2,6-diaminopimelate: step 1/1. Catalyzes the stereoinversion of LL-2,6-diaminopimelate (L,L-DAP) to meso-diaminopimelate (meso-DAP), a precursor of L-lysine and an essential component of the bacterial peptidoglycan. This is Diaminopimelate epimerase from Mycolicibacterium gilvum (strain PYR-GCK) (Mycobacterium gilvum (strain PYR-GCK)).